Consider the following 707-residue polypeptide: Elongation factor G 2 (707 aa).

The tr-type G domain maps to 8–290; it reads ERYRNIGISA…AVIDYLPSPA (283 aa). Residues 17–24, 88–92, and 142–145 contribute to the GTP site; these read AHIDAGKT, DTPGH, and NKMD.

The protein belongs to the TRAFAC class translation factor GTPase superfamily. Classic translation factor GTPase family. EF-G/EF-2 subfamily.

The protein localises to the cytoplasm. Functionally, catalyzes the GTP-dependent ribosomal translocation step during translation elongation. During this step, the ribosome changes from the pre-translocational (PRE) to the post-translocational (POST) state as the newly formed A-site-bound peptidyl-tRNA and P-site-bound deacylated tRNA move to the P and E sites, respectively. Catalyzes the coordinated movement of the two tRNA molecules, the mRNA and conformational changes in the ribosome. This chain is Elongation factor G 2, found in Bordetella bronchiseptica (strain ATCC BAA-588 / NCTC 13252 / RB50) (Alcaligenes bronchisepticus).